The chain runs to 661 residues: Heme transporter BhuA (661 aa).

An N-terminal signal peptide occupies residues 1 to 23; sequence MKFTRTLVLASTSLLATVATSQA. The TBDR plug domain maps to 48–159; it reads KDNIEATGGT…AAGAIRYETV (112 aa). Residues 170 to 661 enclose the TBDR beta-barrel domain; it reads TFGARIIGSY…TFTFQTAFKF (492 aa).

This sequence belongs to the TonB-dependent receptor family.

It localises to the cell outer membrane. Functionally, heme transporter. This Brucella ovis (strain ATCC 25840 / 63/290 / NCTC 10512) protein is Heme transporter BhuA (bhuA).